A 132-amino-acid polypeptide reads, in one-letter code: Small ribosomal subunit protein uS8 (132 aa).

This sequence belongs to the universal ribosomal protein uS8 family. Part of the 30S ribosomal subunit. Contacts proteins S5 and S12.

One of the primary rRNA binding proteins, it binds directly to 16S rRNA central domain where it helps coordinate assembly of the platform of the 30S subunit. This chain is Small ribosomal subunit protein uS8, found in Geobacter metallireducens (strain ATCC 53774 / DSM 7210 / GS-15).